The sequence spans 142 residues: Transcription antitermination protein NusB (142 aa).

This sequence belongs to the NusB family.

Its function is as follows. Involved in transcription antitermination. Required for transcription of ribosomal RNA (rRNA) genes. Binds specifically to the boxA antiterminator sequence of the ribosomal RNA (rrn) operons. The polypeptide is Transcription antitermination protein NusB (Latilactobacillus sakei subsp. sakei (strain 23K) (Lactobacillus sakei subsp. sakei)).